The following is a 612-amino-acid chain: Cytoplasmic dynein 1 intermediate chain 2 (612 aa).

2 stretches are compositionally biased toward basic and acidic residues: residues 1 to 13 (MSDKSDLKAELER) and 20 to 43 (QIREEKKRKEEERKKKETDQKKEA). The disordered stretch occupies residues 1-188 (MSDKSDLKAE…PHELTEEEKQ (188 aa)). Ser-2 is modified (N-acetylserine). Position 51 is a diphosphoserine (Ser-51). A phosphoserine mark is found at Ser-51 and Ser-84. Low complexity predominate over residues 82–91 (PSSKSVSTPS). Thr-89 is subject to Phosphothreonine. Phosphoserine occurs at positions 91, 95, and 98. Residues 164–188 (EKTLKKDEENDSKAPPHELTEEEKQ) show a composition bias toward basic and acidic residues. WD repeat units lie at residues 251 to 300 (SKHR…TTPE), 304 to 344 (HCQS…RTPV), 353 to 394 (AHTH…HPQD), 403 to 443 (SKAV…AGIS), 448 to 493 (GHQG…PLYS), 496 to 536 (DNSD…EVPT), and 542 to 581 (EGNPALNRVRWTHSGREIAVGDSEGQIVIYDVGEQIAVPR).

Belongs to the dynein intermediate chain family. As to quaternary structure, homodimer. The cytoplasmic dynein 1 complex consists of two catalytic heavy chains (HCs) and a number of non-catalytic subunits presented by intermediate chains (ICs), light intermediate chains (LICs) and light chains (LCs); the composition seems to vary in respect to the IC, LIC and LC composition. The heavy chain homodimer serves as a scaffold for the probable homodimeric assembly of the respective non-catalytic subunits. The ICs and LICs bind directly to the HC dimer and the LCs assemble on the IC dimer. Interacts with DYNLT3. Interacts with DYNLT1. Interacts (dephosphorylated at Ser-84) with DCTN1. Interacts with BICD2. Interacts with SPEF2. Interacts with CFAP61. The phosphorylation status of Ser-84 appears to be involved in dynactin-dependent target binding. In terms of processing, pyrophosphorylation by 5-diphosphoinositol pentakisphosphate (5-IP7) promotes interaction with DCTN1. Serine pyrophosphorylation is achieved by Mg(2+)-dependent, but enzyme independent transfer of a beta-phosphate from a inositol pyrophosphate to a pre-phosphorylated serine residue.

The protein localises to the cytoplasm. The protein resides in the cytoskeleton. Its function is as follows. Acts as one of several non-catalytic accessory components of the cytoplasmic dynein 1 complex that are thought to be involved in linking dynein to cargos and to adapter proteins that regulate dynein function. Cytoplasmic dynein 1 acts as a motor for the intracellular retrograde motility of vesicles and organelles along microtubules. The intermediate chains mediate the binding of dynein to dynactin via its 150 kDa component (p150-glued) DCTN1. Involved in membrane-transport, such as Golgi apparatus, late endosomes and lysosomes. The protein is Cytoplasmic dynein 1 intermediate chain 2 (Dync1i2) of Mus musculus (Mouse).